Here is a 160-residue protein sequence, read N- to C-terminus: Ribosomal RNA large subunit methyltransferase H (160 aa).

Residues L78, G109, and L128–L133 each bind S-adenosyl-L-methionine.

Belongs to the RNA methyltransferase RlmH family. In terms of assembly, homodimer.

Its subcellular location is the cytoplasm. The enzyme catalyses pseudouridine(1915) in 23S rRNA + S-adenosyl-L-methionine = N(3)-methylpseudouridine(1915) in 23S rRNA + S-adenosyl-L-homocysteine + H(+). In terms of biological role, specifically methylates the pseudouridine at position 1915 (m3Psi1915) in 23S rRNA. The polypeptide is Ribosomal RNA large subunit methyltransferase H (Alcanivorax borkumensis (strain ATCC 700651 / DSM 11573 / NCIMB 13689 / SK2)).